The primary structure comprises 422 residues: Glyceraldehyde-3-phosphate dehydrogenase GAPCP1, chloroplastic (422 aa).

A chloroplast-targeting transit peptide spans 1–69 (MAFSSLLRSA…NARSVQPIKA (69 aa)). Over residues 50-63 (SGISSSLQNGNARS) the composition is skewed to polar residues. The tract at residues 50 to 84 (SGISSSLQNGNARSVQPIKATATEVPSAVRRSSSS) is disordered. N-acetylthreonine is present on threonine 70. NAD(+)-binding positions include 96-97 (RI), aspartate 118, and arginine 164. Residues 235-237 (SCT), threonine 266, 295-296 (TG), and arginine 318 each bind D-glyceraldehyde 3-phosphate. The Nucleophile role is filled by cysteine 236. Asparagine 400 serves as a coordination point for NAD(+).

This sequence belongs to the glyceraldehyde-3-phosphate dehydrogenase family. Homotetramer. As to expression, expressed in shoot and root vasculature, leaf veins and vascular tissue of flowers and siliques.

It localises to the plastid. The protein localises to the chloroplast stroma. It catalyses the reaction D-glyceraldehyde 3-phosphate + phosphate + NAD(+) = (2R)-3-phospho-glyceroyl phosphate + NADH + H(+). Involved in plastidial glycolytic pathway and plays a specific role in glycolytic energy production in non-green plastids and chloroplasts. Essential for breakdown of starch to form sucrose for export to non-photosynthetic tissues, and to generate primary metabolites for anabolic pathways such as fatty acid and amino acid synthesis. Plays an important role in plant development by providing substrates for the phosphorylated pathway of serine biosynthesis in roots. Plays a crucial role in pollen development. Functionally redundant with GAPCP2. In Arabidopsis thaliana (Mouse-ear cress), this protein is Glyceraldehyde-3-phosphate dehydrogenase GAPCP1, chloroplastic (GAPCP1).